The following is a 34-amino-acid chain: Toxin Ptu1 (34 aa).

Disulfide bonds link Cys-5–Cys-20, Cys-12–Cys-26, and Cys-19–Cys-33.

Its subcellular location is the secreted. In terms of biological role, binds reversibly and blocks N-type voltage-gated calcium channels (Cav). The chain is Toxin Ptu1 from Peirates turpis (Assassin bug).